The following is a 247-amino-acid chain: MREMMMNNMLNDVPTPWAMYFQDSATPNMEGMMELHNNVLFYLCVMLGFVTYMLYNVMTVYNKSAMAYKYMNHGQFMEMMWTTFPAMMLLMMAFPSFMLLYMCDEVMAPAMTIKAMGLQWYWKYEYSDFMVEKGETMEFESYMIPEDLLEDGQLRMLDVDASVVCPVDTHMRFMVTSADVIHDFCMPSLGIKIDAAPGRLNQTSALMQREGVYYGQCSELCGVMHSSMPIKIEAVPTVDFLAWIDEQ.

Over 1 to 38 the chain is Mitochondrial intermembrane; that stretch reads MREMMMNNMLNDVPTPWAMYFQDSATPNMEGMMELHNN. The chain crosses the membrane as a helical span at residues 39 to 55; the sequence is VLFYLCVMLGFVTYMLY. Topologically, residues 56–86 are mitochondrial matrix; it reads NVMTVYNKSAMAYKYMNHGQFMEMMWTTFPA. Residues 87-103 traverse the membrane as a helical segment; sequence MMLLMMAFPSFMLLYMC. Residues 104-247 lie on the Mitochondrial intermembrane side of the membrane; that stretch reads DEVMAPAMTI…VDFLAWIDEQ (144 aa). Cu cation is bound by residues H182, C217, E219, C221, H225, and M228. E219 is a binding site for Mg(2+).

This sequence belongs to the cytochrome c oxidase subunit 2 family. Component of the cytochrome c oxidase (complex IV, CIV), a multisubunit enzyme composed of a catalytic core of 3 subunits and several supernumerary subunits. The complex exists as a monomer or a dimer and forms supercomplexes (SCs) in the inner mitochondrial membrane with ubiquinol-cytochrome c oxidoreductase (cytochrome b-c1 complex, complex III, CIII). The cofactor is Cu cation.

The protein localises to the mitochondrion inner membrane. It carries out the reaction 4 Fe(II)-[cytochrome c] + O2 + 8 H(+)(in) = 4 Fe(III)-[cytochrome c] + 2 H2O + 4 H(+)(out). Its function is as follows. Component of the cytochrome c oxidase, the last enzyme in the mitochondrial electron transport chain which drives oxidative phosphorylation. The respiratory chain contains 3 multisubunit complexes succinate dehydrogenase (complex II, CII), ubiquinol-cytochrome c oxidoreductase (cytochrome b-c1 complex, complex III, CIII) and cytochrome c oxidase (complex IV, CIV), that cooperate to transfer electrons derived from NADH and succinate to molecular oxygen, creating an electrochemical gradient over the inner membrane that drives transmembrane transport and the ATP synthase. Cytochrome c oxidase is the component of the respiratory chain that catalyzes the reduction of oxygen to water. Electrons originating from reduced cytochrome c in the intermembrane space (IMS) are transferred via the dinuclear copper A center (CU(A)) of subunit 2 and heme A of subunit 1 to the active site in subunit 1, a binuclear center (BNC) formed by heme A3 and copper B (CU(B)). The BNC reduces molecular oxygen to 2 water molecules using 4 electrons from cytochrome c in the IMS and 4 protons from the mitochondrial matrix. The polypeptide is Cytochrome c oxidase subunit 2 (COX2) (Eeniella nana (Yeast)).